The sequence spans 486 residues: Ribulose bisphosphate carboxylase large chain (486 aa).

Residues Asn125 and Thr175 each coordinate substrate. Lys177 acts as the Proton acceptor in catalysis. Residue Lys179 coordinates substrate. Residues Lys203, Asp205, and Glu206 each contribute to the Mg(2+) site. Lys203 is modified (N6-carboxylysine). His295 acts as the Proton acceptor in catalysis. 3 residues coordinate substrate: Arg296, His328, and Ser380.

This sequence belongs to the RuBisCO large chain family. Type I subfamily. Heterohexadecamer of 8 large chains and 8 small chains. It depends on Mg(2+) as a cofactor.

It carries out the reaction 2 (2R)-3-phosphoglycerate + 2 H(+) = D-ribulose 1,5-bisphosphate + CO2 + H2O. The enzyme catalyses D-ribulose 1,5-bisphosphate + O2 = 2-phosphoglycolate + (2R)-3-phosphoglycerate + 2 H(+). Functionally, ruBisCO catalyzes two reactions: the carboxylation of D-ribulose 1,5-bisphosphate, the primary event in carbon dioxide fixation, as well as the oxidative fragmentation of the pentose substrate. Both reactions occur simultaneously and in competition at the same active site. The polypeptide is Ribulose bisphosphate carboxylase large chain (Afipia carboxidovorans (strain ATCC 49405 / DSM 1227 / KCTC 32145 / OM5) (Oligotropha carboxidovorans)).